Consider the following 193-residue polypeptide: Holliday junction branch migration complex subunit RuvA (193 aa).

The tract at residues 1 to 64 (MITSLTGTIL…EDAHLLYGFM (64 aa)) is domain I. The tract at residues 65–139 (TVAERDMFRL…DKMGGIAPGP (75 aa)) is domain II. Residues 139-143 (PMGRG) are flexible linker. A domain III region spans residues 144–193 (GAGDPRQEAIAALLTLGYKPAQASQAIAGLADGLGLEDLIRQSLQNLSRH).

It belongs to the RuvA family. As to quaternary structure, homotetramer. Forms an RuvA(8)-RuvB(12)-Holliday junction (HJ) complex. HJ DNA is sandwiched between 2 RuvA tetramers; dsDNA enters through RuvA and exits via RuvB. An RuvB hexamer assembles on each DNA strand where it exits the tetramer. Each RuvB hexamer is contacted by two RuvA subunits (via domain III) on 2 adjacent RuvB subunits; this complex drives branch migration. In the full resolvosome a probable DNA-RuvA(4)-RuvB(12)-RuvC(2) complex forms which resolves the HJ.

It localises to the cytoplasm. In terms of biological role, the RuvA-RuvB-RuvC complex processes Holliday junction (HJ) DNA during genetic recombination and DNA repair, while the RuvA-RuvB complex plays an important role in the rescue of blocked DNA replication forks via replication fork reversal (RFR). RuvA specifically binds to HJ cruciform DNA, conferring on it an open structure. The RuvB hexamer acts as an ATP-dependent pump, pulling dsDNA into and through the RuvAB complex. HJ branch migration allows RuvC to scan DNA until it finds its consensus sequence, where it cleaves and resolves the cruciform DNA. This is Holliday junction branch migration complex subunit RuvA from Acidithiobacillus ferrooxidans (strain ATCC 53993 / BNL-5-31) (Leptospirillum ferrooxidans (ATCC 53993)).